Consider the following 331-residue polypeptide: Pantothenate kinase (331 aa).

109-116 contributes to the ATP binding site; that stretch reads GSVAVGKS.

Belongs to the prokaryotic pantothenate kinase family.

The protein resides in the cytoplasm. The catalysed reaction is (R)-pantothenate + ATP = (R)-4'-phosphopantothenate + ADP + H(+). It participates in cofactor biosynthesis; coenzyme A biosynthesis; CoA from (R)-pantothenate: step 1/5. This Sinorhizobium fredii (strain NBRC 101917 / NGR234) protein is Pantothenate kinase.